The primary structure comprises 258 residues: Synapse differentiation-inducing gene protein 1 (258 aa).

At 1–181 the chain is on the cytoplasmic side; it reads MDGIIEQKSV…NFLMMPPRDH (181 aa). Ser137 carries the phosphoserine modification. The helical transmembrane segment at 182-202 threads the bilayer; it reads LGLSVFSMLCCFWPLGIAAFY. The Extracellular portion of the chain corresponds to 203 to 228; sequence LSHETNKAVAKGDFHQASTSSRRALF. An intramembrane region (helical) is located at residues 229–249; sequence LAVLSITIGTGIYVGVAVALI. The Extracellular segment spans residues 250–258; it reads AYLSKNNHL.

This sequence belongs to the CD225/Dispanin family. As to quaternary structure, homodimer. Interacts with GRIA1 and GRIA2. In terms of tissue distribution, brain-specific. Expressed in Purkinje neurons in cerebellum. Also detected in the hippocampus. Found at excitatory synapses and postsynaptic cells.

It is found in the cell membrane. The protein resides in the early endosome membrane. The protein localises to the postsynaptic density membrane. It localises to the synapse. Its subcellular location is the cell projection. It is found in the dendrite. The protein resides in the dendritic spine. May regulate AMPA receptor content at nascent synapses, and have a role in postsynaptic development and maturation. In Mus musculus (Mouse), this protein is Synapse differentiation-inducing gene protein 1 (Syndig1).